A 202-amino-acid chain; its full sequence is Imidazole glycerol phosphate synthase subunit HisH 2 (202 aa).

The Glutamine amidotransferase type-1 domain maps to 1–202; the sequence is MIAIIDYGMG…KLMENFIKQA (202 aa). C80 functions as the Nucleophile in the catalytic mechanism. Residues H183 and E185 contribute to the active site.

As to quaternary structure, heterodimer of HisH and HisF.

The protein resides in the cytoplasm. It carries out the reaction 5-[(5-phospho-1-deoxy-D-ribulos-1-ylimino)methylamino]-1-(5-phospho-beta-D-ribosyl)imidazole-4-carboxamide + L-glutamine = D-erythro-1-(imidazol-4-yl)glycerol 3-phosphate + 5-amino-1-(5-phospho-beta-D-ribosyl)imidazole-4-carboxamide + L-glutamate + H(+). It catalyses the reaction L-glutamine + H2O = L-glutamate + NH4(+). The protein operates within amino-acid biosynthesis; L-histidine biosynthesis; L-histidine from 5-phospho-alpha-D-ribose 1-diphosphate: step 5/9. Functionally, IGPS catalyzes the conversion of PRFAR and glutamine to IGP, AICAR and glutamate. The HisH subunit provides the glutamine amidotransferase activity that produces the ammonia necessary to HisF for the synthesis of IGP and AICAR. In Methanococcus maripaludis (strain DSM 14266 / JCM 13030 / NBRC 101832 / S2 / LL), this protein is Imidazole glycerol phosphate synthase subunit HisH 2 (hisH2).